We begin with the raw amino-acid sequence, 838 residues long: Urease (838 aa).

The 437-residue stretch at 402-838 (GGFDTHIHFI…LPLTQDYFVY (437 aa)) folds into the Urease domain. The Ni(2+) site is built by histidine 407, histidine 409, and lysine 490. Lysine 490 bears the N6-carboxylysine mark. Histidine 492 contributes to the substrate binding site. Ni(2+)-binding residues include histidine 519 and histidine 545. Catalysis depends on histidine 593, which acts as the Proton donor. Ni(2+) is bound at residue aspartate 633.

The protein in the C-terminal section; belongs to the metallo-dependent hydrolases superfamily. Urease alpha subunit family. Homohexamer. Ni cation is required as a cofactor. Carboxylation allows a single lysine to coordinate two nickel ions.

It carries out the reaction urea + 2 H2O + H(+) = hydrogencarbonate + 2 NH4(+). Its pathway is nitrogen metabolism; urea degradation; CO(2) and NH(3) from urea (urease route): step 1/1. This is Urease (ure1) from Aspergillus fumigatus (strain ATCC MYA-4609 / CBS 101355 / FGSC A1100 / Af293) (Neosartorya fumigata).